The sequence spans 163 residues: MATASSFDVVSDFDQQELVNAVDQARREITNRYDLKDSATTLELTAETLTINTDSEFSLDAVVTLLQTKVAKRNLSLKIFDFGKVETASGNRVRQVITLQRGLSSELAKDLSKQIRDQFKKVQVSIQGDALRVSAKSKDDLQTVIQYLKQQDVPAPLQFTNYR.

It belongs to the YajQ family.

In terms of biological role, nucleotide-binding protein. The polypeptide is Nucleotide-binding protein syc0675_c (Synechococcus sp. (strain ATCC 27144 / PCC 6301 / SAUG 1402/1) (Anacystis nidulans)).